A 297-amino-acid polypeptide reads, in one-letter code: Putative peptidyl-prolyl cis-trans isomerase YacD (297 aa).

Residues 1–32 form the signal peptide; it reads MKSRTIWTIILGALLVCCIAVAYTLTKSQAGA. One can recognise a PpiC domain in the interval 154 to 247; that stretch reads DDSYRIRHIV…NGYAIIQLKE (94 aa).

It catalyses the reaction [protein]-peptidylproline (omega=180) = [protein]-peptidylproline (omega=0). This is Putative peptidyl-prolyl cis-trans isomerase YacD (yacD) from Bacillus subtilis (strain 168).